Consider the following 188-residue polypeptide: MSRLRIFDDHTPNTPFFVSKEQAQITAELHKIGITFERWEATQAIEPGATAEQVMAAYRADIDRLIATHGFKTVDVISIAPDNAKREEMRAKFLEEHFHKEDEVRFFVAGSGLFTVHSGNKVYEIECVKNDLIAIPDGTLHWFDMGAAPYFVAIRFFTEPDGWVGHFTGTDIAQRFPRYIPEGCQSAH.

Positions 97, 99, 103, and 141 each coordinate Fe(2+). Ni(2+)-binding residues include His-97, His-99, Glu-103, and His-141.

The protein belongs to the acireductone dioxygenase (ARD) family. Monomer. It depends on Fe(2+) as a cofactor. Ni(2+) serves as cofactor.

The enzyme catalyses 1,2-dihydroxy-5-(methylsulfanyl)pent-1-en-3-one + O2 = 3-(methylsulfanyl)propanoate + CO + formate + 2 H(+). It catalyses the reaction 1,2-dihydroxy-5-(methylsulfanyl)pent-1-en-3-one + O2 = 4-methylsulfanyl-2-oxobutanoate + formate + 2 H(+). It participates in amino-acid biosynthesis; L-methionine biosynthesis via salvage pathway; L-methionine from S-methyl-5-thio-alpha-D-ribose 1-phosphate: step 5/6. Catalyzes 2 different reactions between oxygen and the acireductone 1,2-dihydroxy-3-keto-5-methylthiopentene (DHK-MTPene) depending upon the metal bound in the active site. Fe-containing acireductone dioxygenase (Fe-ARD) produces formate and 2-keto-4-methylthiobutyrate (KMTB), the alpha-ketoacid precursor of methionine in the methionine recycle pathway. Ni-containing acireductone dioxygenase (Ni-ARD) produces methylthiopropionate, carbon monoxide and formate, and does not lie on the methionine recycle pathway. The chain is Acireductone dioxygenase from Xylella fastidiosa (strain M12).